The sequence spans 178 residues: Probable chorismate pyruvate-lyase (178 aa).

Positions 37, 78, 114, and 165 each coordinate substrate.

The protein belongs to the UbiC family.

Its subcellular location is the cytoplasm. It carries out the reaction chorismate = 4-hydroxybenzoate + pyruvate. The protein operates within cofactor biosynthesis; ubiquinone biosynthesis. Its function is as follows. Removes the pyruvyl group from chorismate, with concomitant aromatization of the ring, to provide 4-hydroxybenzoate (4HB) for the ubiquinone pathway. The protein is Probable chorismate pyruvate-lyase of Aeromonas hydrophila subsp. hydrophila (strain ATCC 7966 / DSM 30187 / BCRC 13018 / CCUG 14551 / JCM 1027 / KCTC 2358 / NCIMB 9240 / NCTC 8049).